The following is an 82-amino-acid chain: uncharacterized protein (82 aa).

This is an uncharacterized protein from Escherichia coli (strain K12).